A 556-amino-acid polypeptide reads, in one-letter code: Urease subunit alpha 1 (556 aa).

Residues 127-556 (GAVDTHVHLL…SVSLNRLYFL (430 aa)) enclose the Urease domain. His-132, His-134, and Lys-212 together coordinate Ni(2+). Position 212 is an N6-carboxylysine (Lys-212). His-214 provides a ligand contact to substrate. 2 residues coordinate Ni(2+): His-241 and His-267. Residue His-315 is the Proton donor of the active site. Ni(2+) is bound at residue Asp-355.

Belongs to the metallo-dependent hydrolases superfamily. Urease alpha subunit family. As to quaternary structure, may form a heterohexamer of 3 UreC (alpha) and 3 UreAB (gamma/beta) subunits. May also form a heterotrimer of UreA (gamma), UreB (beta) and UreC (alpha) subunits. Three heterotrimers associate to form the active enzyme. The cofactor is Ni cation. Post-translationally, carboxylation allows a single lysine to coordinate two nickel ions.

The protein localises to the cytoplasm. It carries out the reaction urea + 2 H2O + H(+) = hydrogencarbonate + 2 NH4(+). The protein operates within nitrogen metabolism; urea degradation; CO(2) and NH(3) from urea (urease route): step 1/1. This chain is Urease subunit alpha 1, found in Streptomyces avermitilis (strain ATCC 31267 / DSM 46492 / JCM 5070 / NBRC 14893 / NCIMB 12804 / NRRL 8165 / MA-4680).